A 463-amino-acid chain; its full sequence is Retinoic acid receptor RXR-gamma (463 aa).

Residues 1–138 (MYGNYSHFMK…TSPGSLVKHI (138 aa)) form a modulating region. The tract at residues 16–53 (GGSPGHTGSTSMSPSVALPTGKPMDSHPSYTDTPVSAP) is disordered. 2 consecutive NR C4-type zinc fingers follow at residues 139 to 159 (CAICGDRSSGKHYGVYSCEGC) and 175 to 199 (CRDNKDCLIDKRQRNRCQYCRYQKC). Positions 139–204 (CAICGDRSSG…RYQKCLVMGM (66 aa)) form a DNA-binding region, nuclear receptor. Positions 205–230 (KREAVQEERQRSRERAESEAECASSS) are hinge. The span at 211 to 222 (EERQRSRERAES) shows a compositional bias: basic and acidic residues. The tract at residues 211-232 (EERQRSRERAESEAECASSSHE) is disordered. Residues 231–459 (HEDMPVERIL…SFLMEMLETP (229 aa)) form the NR LBD domain.

This sequence belongs to the nuclear hormone receptor family. NR2 subfamily. As to quaternary structure, homodimer. Heterodimer with a RAR molecule. Binds DNA preferentially as a RAR/RXR heterodimer. Interacts with RARA. Acetylated by EP300.

It is found in the nucleus. Its subcellular location is the cytoplasm. Its function is as follows. Receptor for retinoic acid. Retinoic acid receptors bind as heterodimers to their target response elements in response to their ligands, all-trans or 9-cis retinoic acid, and regulate gene expression in various biological processes. The RAR/RXR heterodimers bind to the retinoic acid response elements (RARE) composed of tandem 5'-AGGTCA-3' sites known as DR1-DR5. The high affinity ligand for RXRs is 9-cis retinoic acid. The polypeptide is Retinoic acid receptor RXR-gamma (Rxrg) (Mus musculus (Mouse)).